The following is a 153-amino-acid chain: MNVGVAHSEVNPNTRVMNSRGIWLTYALGVGMLHIVLLSIPFFSVPVVWTLTNVIHNFGMYVFMHAVKGTPFETPDQGKARLLTHWEQLDYGVQFTSSRKFFTISPIILYFLASFYTKYDTAHFVINTASLLSVLIPKLPQLHGVRIFGINKY.

The Cytoplasmic portion of the chain corresponds to 1 to 27 (MNVGVAHSEVNPNTRVMNSRGIWLTYA). 2 helical membrane passes run 28 to 46 (LGVG…FSVP) and 47 to 64 (VVWT…YVFM). Residues 65–105 (HAVKGTPFETPDQGKARLLTHWEQLDYGVQFTSSRKFFTIS) are Cytoplasmic-facing. Helical transmembrane passes span 106 to 123 (PIIL…DTAH) and 124 to 140 (FVIN…PKLP). Residues 141–153 (QLHGVRIFGINKY) are Cytoplasmic-facing.

The protein belongs to the ORM family. In terms of assembly, ceramide-sensitive subunit of the serine palmitoyltransferase (SPT) complex, which is also composed of SPTLC1, SPTLC2/3 and SPTSSA/B.

It is found in the endoplasmic reticulum membrane. Functionally, plays an essential role in the homeostatic regulation of sphingolipid de novo biosynthesis by modulating the activity of the serine palmitoyltransferase (SPT) in response to ceramide levels. When complexed to SPT, the binding of ceramides to its N-terminus stabilizes a conformation that block SPT substrate entry, hence preventing SPT catalytic activity. Through this mechanism, maintains ceramide levels at sufficient concentrations for the production of complex sphingolipids, but which prevents the accumulation of ceramides to levels that trigger apoptosis. The sequence is that of ORM1-like protein 1 (ormdl1) from Danio rerio (Zebrafish).